A 132-amino-acid chain; its full sequence is Small ribosomal subunit protein uS11 (132 aa).

It belongs to the universal ribosomal protein uS11 family. Part of the 30S ribosomal subunit. Interacts with proteins S7 and S18. Binds to IF-3.

In terms of biological role, located on the platform of the 30S subunit, it bridges several disparate RNA helices of the 16S rRNA. Forms part of the Shine-Dalgarno cleft in the 70S ribosome. This is Small ribosomal subunit protein uS11 from Chlamydia felis (strain Fe/C-56) (Chlamydophila felis).